The following is a 498-amino-acid chain: MPGAVDFKERISRQRPHDRETYGHAGNTDLQDIVYQLESDRGRIVNSAAVRRLQQKTQVFPLERNAAVRSRLTHSLEVQQTGRFIVRTLFRQLGPRAAEVGLDGLEGALESLVEMACLMHDVGNPPFGHFGEYAINDWFERNLDALFERRIPPGQGDGLLQQRMLTDLKHFEGNAQAIRLVVKLLRLNLTYTQTAGLLKYVRPAYEPKPDKAAANHYLNKKPGFYLSEEAFVDELRRVLGMRPGTRHPVAYIMEAADDISYCLADIEDSVEKGILDIRQLADLLVKKFAVHHSPDAPIPGDADNMSFQRMVDYSLEKAEREPINKVSEFFIRLRVKMIHPLVQHAAQQFIDNFEAVHAGTLGRALMEDGSLPHAIVQTFKDVAMEWVFCHPEVETLELQGYRIIQGLLDFYAPLLRLPAEEFQALAEGRQAAAPHPQLLVRRLPSQQIKAYLEAMKGVAEDPLQRQWEFYHRCRMLQDFVSGMTDQHAQDEYRALSAL.

Positions 71 to 262 (RLTHSLEVQQ…MEAADDISYC (192 aa)) constitute an HD domain.

This sequence belongs to the dGTPase family. Type 1 subfamily. Mg(2+) is required as a cofactor.

The catalysed reaction is dGTP + H2O = 2'-deoxyguanosine + triphosphate + H(+). Functionally, dGTPase preferentially hydrolyzes dGTP over the other canonical NTPs. The chain is Probable deoxyguanosinetriphosphate triphosphohydrolase from Pseudomonas aeruginosa (strain ATCC 15692 / DSM 22644 / CIP 104116 / JCM 14847 / LMG 12228 / 1C / PRS 101 / PAO1).